Consider the following 143-residue polypeptide: Transcriptional regulator MraZ (143 aa).

2 SpoVT-AbrB domains span residues 5–47 and 76–119; these read EYRH…PQSE and ASEC…SKTL.

Belongs to the MraZ family. As to quaternary structure, forms oligomers.

Its subcellular location is the cytoplasm. The protein resides in the nucleoid. In Shouchella clausii (strain KSM-K16) (Alkalihalobacillus clausii), this protein is Transcriptional regulator MraZ.